The sequence spans 111 residues: Nucleoid-associated protein Clim_0875 (111 aa).

It belongs to the YbaB/EbfC family. In terms of assembly, homodimer.

The protein resides in the cytoplasm. The protein localises to the nucleoid. Functionally, binds to DNA and alters its conformation. May be involved in regulation of gene expression, nucleoid organization and DNA protection. This Chlorobium limicola (strain DSM 245 / NBRC 103803 / 6330) protein is Nucleoid-associated protein Clim_0875.